The sequence spans 121 residues: SSKDSKQLDAEVHRKYIYGGHVAAYMNILMEDEPEKYQSHFSSYIKADLAPDNIEEMYKKVHAAIRPDPSPKKSQKQPPKTHKRYNLKKLTYEERKAKLIERLNALNAAGGNDDDDEEDDE.

A disordered region spans residues 63 to 88; it reads AAIRPDPSPKKSQKQPPKTHKRYNLK. Positions 73-87 are enriched in basic residues; it reads KSQKQPPKTHKRYNL.

It belongs to the universal ribosomal protein uL18 family. Component of the large ribosomal subunit (LSU).

It localises to the cytoplasm. Its subcellular location is the nucleus. Component of the ribosome, a large ribonucleoprotein complex responsible for the synthesis of proteins in the cell. The small ribosomal subunit (SSU) binds messenger RNAs (mRNAs) and translates the encoded message by selecting cognate aminoacyl-transfer RNA (tRNA) molecules. The large subunit (LSU) contains the ribosomal catalytic site termed the peptidyl transferase center (PTC), which catalyzes the formation of peptide bonds, thereby polymerizing the amino acids delivered by tRNAs into a polypeptide chain. The nascent polypeptides leave the ribosome through a tunnel in the LSU and interact with protein factors that function in enzymatic processing, targeting, and the membrane insertion of nascent chains at the exit of the ribosomal tunnel. The sequence is that of Large ribosomal subunit protein uL18 (RPL5) from Solanum melongena (Eggplant).